Consider the following 136-residue polypeptide: Small ribosomal subunit protein eS8 (136 aa).

A disordered region spans residues 1–23 (MGVYHGNDLKKPTGGKKRPHQKV). Residues 13–23 (TGGKKRPHQKV) are compositionally biased toward basic residues.

Belongs to the eukaryotic ribosomal protein eS8 family. In terms of assembly, part of the 30S ribosomal subunit.

The chain is Small ribosomal subunit protein eS8 from Hyperthermus butylicus (strain DSM 5456 / JCM 9403 / PLM1-5).